The chain runs to 375 residues: Queuine tRNA-ribosyltransferase (375 aa).

The Proton acceptor role is filled by aspartate 90. Substrate is bound by residues 90–94, aspartate 144, glutamine 190, and glycine 217; that span reads DSGGF. The RNA binding stretch occupies residues 248-254; it reads GIGTPHY. The Nucleophile role is filled by aspartate 267. Positions 272 to 276 are RNA binding; important for wobble base 34 recognition; that stretch reads TRIAR. Residues cysteine 305, cysteine 307, cysteine 310, and histidine 336 each coordinate Zn(2+).

This sequence belongs to the queuine tRNA-ribosyltransferase family. As to quaternary structure, homodimer. Within each dimer, one monomer is responsible for RNA recognition and catalysis, while the other monomer binds to the replacement base PreQ1. It depends on Zn(2+) as a cofactor.

The catalysed reaction is 7-aminomethyl-7-carbaguanine + guanosine(34) in tRNA = 7-aminomethyl-7-carbaguanosine(34) in tRNA + guanine. The protein operates within tRNA modification; tRNA-queuosine biosynthesis. Its function is as follows. Catalyzes the base-exchange of a guanine (G) residue with the queuine precursor 7-aminomethyl-7-deazaguanine (PreQ1) at position 34 (anticodon wobble position) in tRNAs with GU(N) anticodons (tRNA-Asp, -Asn, -His and -Tyr). Catalysis occurs through a double-displacement mechanism. The nucleophile active site attacks the C1' of nucleotide 34 to detach the guanine base from the RNA, forming a covalent enzyme-RNA intermediate. The proton acceptor active site deprotonates the incoming PreQ1, allowing a nucleophilic attack on the C1' of the ribose to form the product. After dissociation, two additional enzymatic reactions on the tRNA convert PreQ1 to queuine (Q), resulting in the hypermodified nucleoside queuosine (7-(((4,5-cis-dihydroxy-2-cyclopenten-1-yl)amino)methyl)-7-deazaguanosine). The polypeptide is Queuine tRNA-ribosyltransferase (Borrelia recurrentis (strain A1)).